The following is a 356-amino-acid chain: Protein-glutamate methylesterase/protein-glutamine glutaminase 2 (356 aa).

Positions 4-121 constitute a Response regulatory domain; it reads RALVVDDSAL…SQSMPEMAEE (118 aa). 4-aspartylphosphate is present on D55. The region spanning 161–356 is the CheB-type methylesterase domain; it reads KAAPRNILAI…MAEEIIRIIG (196 aa). Catalysis depends on residues S173, H200, and D300.

This sequence belongs to the CheB family. In terms of processing, phosphorylated by CheA. Phosphorylation of the N-terminal regulatory domain activates the methylesterase activity.

It localises to the cytoplasm. The catalysed reaction is [protein]-L-glutamate 5-O-methyl ester + H2O = L-glutamyl-[protein] + methanol + H(+). The enzyme catalyses L-glutaminyl-[protein] + H2O = L-glutamyl-[protein] + NH4(+). Its function is as follows. Involved in chemotaxis. Part of a chemotaxis signal transduction system that modulates chemotaxis in response to various stimuli. Catalyzes the demethylation of specific methylglutamate residues introduced into the chemoreceptors (methyl-accepting chemotaxis proteins or MCP) by CheR. Also mediates the irreversible deamidation of specific glutamine residues to glutamic acid. This is Protein-glutamate methylesterase/protein-glutamine glutaminase 2 from Methanosarcina acetivorans (strain ATCC 35395 / DSM 2834 / JCM 12185 / C2A).